We begin with the raw amino-acid sequence, 272 residues long: ATP synthase subunit a (272 aa).

Helical transmembrane passes span 41 to 61 (TLNI…LVLF), 101 to 121 (LIAP…LMDL), 147 to 167 (DVNI…FYSI), 212 to 232 (LFGN…LLPW), and 243 to 263 (AIFH…LTIV).

Belongs to the ATPase A chain family. As to quaternary structure, F-type ATPases have 2 components, CF(1) - the catalytic core - and CF(0) - the membrane proton channel. CF(1) has five subunits: alpha(3), beta(3), gamma(1), delta(1), epsilon(1). CF(0) has three main subunits: a(1), b(2) and c(9-12). The alpha and beta chains form an alternating ring which encloses part of the gamma chain. CF(1) is attached to CF(0) by a central stalk formed by the gamma and epsilon chains, while a peripheral stalk is formed by the delta and b chains.

Its subcellular location is the cell inner membrane. Its function is as follows. Key component of the proton channel; it plays a direct role in the translocation of protons across the membrane. This is ATP synthase subunit a from Cronobacter sakazakii (strain ATCC BAA-894) (Enterobacter sakazakii).